The following is a 1073-amino-acid chain: Guanylyl cyclase C (1073 aa).

Positions 1 to 23 (MKTLLLDLALWSLLFQPGWLSFS) are cleaved as a signal peptide. The Extracellular segment spans residues 24 to 430 (SQVSQNCHNG…PNDITGRGPQ (407 aa)). Asn-32, Asn-75, Asn-79, Asn-195, Asn-284, Asn-307, Asn-345, and Asn-402 each carry an N-linked (GlcNAc...) asparagine glycan. A helical membrane pass occupies residues 431-454 (ILMIAVFTLTGAVVLLLLVALLML). Residues 455 to 1073 (RKYRKDYELR…NTTDKESTYF (619 aa)) lie on the Cytoplasmic side of the membrane. The 261-residue stretch at 489–749 (LKIDDDKRRD…KIETTLAKIF (261 aa)) folds into the Protein kinase domain. Residues 824-954 (TIYFSDIVGF…DTVNTASRME (131 aa)) enclose the Guanylate cyclase domain.

Belongs to the adenylyl cyclase class-4/guanylyl cyclase family. As to quaternary structure, homotrimer. Interacts via its C-terminal region with NHERF4. Interacts with the lectin chaperone VIP36. In terms of processing, glycosylation at Asn-75 and/or Asn-79 is required for interaction with VIP36 while glycosylation at Asn-345 and Asn-402 modulates ligand-mediated GUCY2C activation.

The protein resides in the cell membrane. It is found in the endoplasmic reticulum membrane. It catalyses the reaction GTP = 3',5'-cyclic GMP + diphosphate. Guanylyl cyclase that catalyzes synthesis of cyclic GMP (cGMP) from GTP. Receptor for the E.coli heat-stable enterotoxin; E.coli enterotoxin markedly stimulates the accumulation of cGMP in mammalian cells expressing GUCY2C. Also activated by the endogenous peptides guanylin and uroguanylin. This is Guanylyl cyclase C from Homo sapiens (Human).